We begin with the raw amino-acid sequence, 347 residues long: Mediator of RNA polymerase II transcription subunit 7 (347 aa).

2 disordered regions span residues glycine 97–histidine 172 and valine 302–glutamate 326. Composition is skewed to low complexity over residues serine 108–threonine 171 and valine 302–valine 312.

This sequence belongs to the Mediator complex subunit 7 family. Component of the Mediator complex.

Its subcellular location is the nucleus. In terms of biological role, component of the Mediator complex, a coactivator involved in the regulated transcription of nearly all RNA polymerase II-dependent genes. Mediator functions as a bridge to convey information from gene-specific regulatory proteins to the basal RNA polymerase II transcription machinery. Mediator is recruited to promoters by direct interactions with regulatory proteins and serves as a scaffold for the assembly of a functional preinitiation complex with RNA polymerase II and the general transcription factors. This chain is Mediator of RNA polymerase II transcription subunit 7 (med-7), found in Neurospora crassa (strain ATCC 24698 / 74-OR23-1A / CBS 708.71 / DSM 1257 / FGSC 987).